A 620-amino-acid chain; its full sequence is 1-deoxy-D-xylulose-5-phosphate synthase (620 aa).

Residues His-80 and 121 to 123 (GHS) each bind thiamine diphosphate. Asp-152 contributes to the Mg(2+) binding site. Thiamine diphosphate is bound by residues 153 to 154 (GA), Asn-181, Tyr-288, and Glu-370. Asn-181 contacts Mg(2+).

It belongs to the transketolase family. DXPS subfamily. In terms of assembly, homodimer. Mg(2+) is required as a cofactor. It depends on thiamine diphosphate as a cofactor.

It carries out the reaction D-glyceraldehyde 3-phosphate + pyruvate + H(+) = 1-deoxy-D-xylulose 5-phosphate + CO2. It functions in the pathway metabolic intermediate biosynthesis; 1-deoxy-D-xylulose 5-phosphate biosynthesis; 1-deoxy-D-xylulose 5-phosphate from D-glyceraldehyde 3-phosphate and pyruvate: step 1/1. Functionally, catalyzes the acyloin condensation reaction between C atoms 2 and 3 of pyruvate and glyceraldehyde 3-phosphate to yield 1-deoxy-D-xylulose-5-phosphate (DXP). The sequence is that of 1-deoxy-D-xylulose-5-phosphate synthase from Salmonella agona (strain SL483).